The following is a 197-amino-acid chain: Large ribosomal subunit protein uL5 (197 aa).

The protein belongs to the universal ribosomal protein uL5 family. As to quaternary structure, part of the 50S ribosomal subunit; contacts the 5S rRNA and probably tRNA. Forms a bridge to the 30S subunit in the 70S ribosome.

Its function is as follows. This is one of the proteins that bind and probably mediate the attachment of the 5S RNA into the large ribosomal subunit, where it forms part of the central protuberance. In the 70S ribosome it contacts protein S13 of the 30S subunit (bridge B1b), connecting the 2 subunits; this bridge is implicated in subunit movement. May contact the P site tRNA; the 5S rRNA and some of its associated proteins might help stabilize positioning of ribosome-bound tRNAs. The chain is Large ribosomal subunit protein uL5 from Caldivirga maquilingensis (strain ATCC 700844 / DSM 13496 / JCM 10307 / IC-167).